We begin with the raw amino-acid sequence, 240 residues long: Probable phosphatase Athe_0620 (240 aa).

Positions 8, 10, 16, 41, 74, 102, 132, 192, and 194 each coordinate Zn(2+).

This sequence belongs to the PHP family. It depends on Zn(2+) as a cofactor.

The polypeptide is Probable phosphatase Athe_0620 (Caldicellulosiruptor bescii (strain ATCC BAA-1888 / DSM 6725 / KCTC 15123 / Z-1320) (Anaerocellum thermophilum)).